Here is a 156-residue protein sequence, read N- to C-terminus: Dynein 16 kDa light chain, flagellar outer arm (156 aa).

A Thioredoxin domain is found at 2–116 (AAGLPPVQYS…LNQQVLSLTP (115 aa)). Residues C37 and C40 are joined by a disulfide bond.

As to quaternary structure, consists of at least 3 heavy chains (alpha, beta and gamma), 2 intermediate chains and 8 light chains.

The protein localises to the cell projection. It is found in the cilium. It localises to the flagellum. Its subcellular location is the cytoplasm. The protein resides in the cytoskeleton. The protein localises to the flagellum axoneme. Functionally, may be involved in regulating the redox state of functionally important thiol groups within dynein. The sequence is that of Dynein 16 kDa light chain, flagellar outer arm from Chlamydomonas reinhardtii (Chlamydomonas smithii).